The following is a 126-amino-acid chain: 3-aminoacrylate deaminase RutC (126 aa).

The protein belongs to the RutC family.

It catalyses the reaction (Z)-3-aminoacrylate + H2O + H(+) = 3-oxopropanoate + NH4(+). Its function is as follows. Involved in pyrimidine catabolism. Catalyzes the deamination of 3-aminoacrylate to malonic semialdehyde, a reaction that can also occur spontaneously. RutC may facilitate the reaction and modulate the metabolic fitness, rather than catalyzing essential functions. The sequence is that of 3-aminoacrylate deaminase RutC from Acinetobacter baylyi (strain ATCC 33305 / BD413 / ADP1).